The chain runs to 154 residues: Myoglobin (154 aa).

Residues 2-148 (GLSDGEWQLV…FRKDMASNYK (147 aa)) enclose the Globin domain. S4 is subject to Phosphoserine. H65 is a binding site for nitrite. H65 provides a ligand contact to O2. Residue T68 is modified to Phosphothreonine. H94 serves as a coordination point for heme b.

The protein belongs to the globin family. Monomeric.

Its subcellular location is the cytoplasm. It localises to the sarcoplasm. It carries out the reaction Fe(III)-heme b-[protein] + nitric oxide + H2O = Fe(II)-heme b-[protein] + nitrite + 2 H(+). The catalysed reaction is H2O2 + AH2 = A + 2 H2O. Monomeric heme protein which primary function is to store oxygen and facilitate its diffusion within muscle tissues. Reversibly binds oxygen through a pentacoordinated heme iron and enables its timely and efficient release as needed during periods of heightened demand. Depending on the oxidative conditions of tissues and cells, and in addition to its ability to bind oxygen, it also has a nitrite reductase activity whereby it regulates the production of bioactive nitric oxide. Under stress conditions, like hypoxia and anoxia, it also protects cells against reactive oxygen species thanks to its pseudoperoxidase activity. The chain is Myoglobin (MB) from Gorilla gorilla beringei (Mountain gorilla).